The chain runs to 281 residues: Proteasome subunit beta 2 (281 aa).

A propeptide spans 1–53 (MEANTRSTGRLPAAFLTPGSSSFMDFLSEHQPEILPGNRQLPPTQGVIEAPHG) (removed in mature form; by autocatalysis). Thr-54 (nucleophile) is an active-site residue.

It belongs to the peptidase T1B family. In terms of assembly, the 20S proteasome core is composed of 14 alpha and 14 beta subunits that assemble into four stacked heptameric rings, resulting in a barrel-shaped structure. The two inner rings, each composed of seven catalytic beta subunits, are sandwiched by two outer rings, each composed of seven alpha subunits. The catalytic chamber with the active sites is on the inside of the barrel. Has a gated structure, the ends of the cylinder being occluded by the N-termini of the alpha-subunits. Is capped by the proteasome-associated ATPase, ARC.

It is found in the cytoplasm. The catalysed reaction is Cleavage of peptide bonds with very broad specificity.. Its pathway is protein degradation; proteasomal Pup-dependent pathway. The formation of the proteasomal ATPase ARC-20S proteasome complex, likely via the docking of the C-termini of ARC into the intersubunit pockets in the alpha-rings, may trigger opening of the gate for substrate entry. Interconversion between the open-gate and close-gate conformations leads to a dynamic regulation of the 20S proteasome proteolysis activity. Component of the proteasome core, a large protease complex with broad specificity involved in protein degradation. The polypeptide is Proteasome subunit beta 2 (Streptomyces avermitilis (strain ATCC 31267 / DSM 46492 / JCM 5070 / NBRC 14893 / NCIMB 12804 / NRRL 8165 / MA-4680)).